The sequence spans 489 residues: Acetyl-coenzyme A carboxylase carboxyl transferase subunit beta, chloroplastic (489 aa).

Positions 225–489 constitute a CoA carboxyltransferase N-terminal domain; the sequence is LWIQCDNCYG…FFPLNKNEIK (265 aa). Positions 229, 232, 245, and 248 each coordinate Zn(2+). The C4-type zinc-finger motif lies at 229–248; that stretch reads CDNCYGLKYKKVEMNVCEEC.

This sequence belongs to the AccD/PCCB family. As to quaternary structure, acetyl-CoA carboxylase is a heterohexamer composed of biotin carboxyl carrier protein, biotin carboxylase and 2 subunits each of ACCase subunit alpha and ACCase plastid-coded subunit beta (accD). The cofactor is Zn(2+).

The protein localises to the plastid. It localises to the chloroplast stroma. It catalyses the reaction N(6)-carboxybiotinyl-L-lysyl-[protein] + acetyl-CoA = N(6)-biotinyl-L-lysyl-[protein] + malonyl-CoA. It participates in lipid metabolism; malonyl-CoA biosynthesis; malonyl-CoA from acetyl-CoA: step 1/1. Functionally, component of the acetyl coenzyme A carboxylase (ACC) complex. Biotin carboxylase (BC) catalyzes the carboxylation of biotin on its carrier protein (BCCP) and then the CO(2) group is transferred by the transcarboxylase to acetyl-CoA to form malonyl-CoA. This Brassica napus (Rape) protein is Acetyl-coenzyme A carboxylase carboxyl transferase subunit beta, chloroplastic.